The chain runs to 232 residues: 6-phosphogluconolactonase (232 aa).

Belongs to the glucosamine/galactosamine-6-phosphate isomerase family. 6-phosphogluconolactonase subfamily.

It catalyses the reaction 6-phospho-D-glucono-1,5-lactone + H2O = 6-phospho-D-gluconate + H(+). Its pathway is carbohydrate degradation; pentose phosphate pathway; D-ribulose 5-phosphate from D-glucose 6-phosphate (oxidative stage): step 2/3. Its function is as follows. Hydrolysis of 6-phosphogluconolactone to 6-phosphogluconate. The polypeptide is 6-phosphogluconolactonase (pgl) (Rhizobium meliloti (strain 1021) (Ensifer meliloti)).